The sequence spans 443 residues: Xaa-Pro dipeptidase (443 aa).

Asp-244, Asp-255, His-336, Glu-381, and Glu-420 together coordinate Mn(2+).

It belongs to the peptidase M24B family. Bacterial-type prolidase subfamily. Mn(2+) is required as a cofactor.

The enzyme catalyses Xaa-L-Pro dipeptide + H2O = an L-alpha-amino acid + L-proline. Functionally, splits dipeptides with a prolyl residue in the C-terminal position. The chain is Xaa-Pro dipeptidase from Stenotrophomonas maltophilia (strain R551-3).